Reading from the N-terminus, the 696-residue chain is Carotenoid dioxygenase carX (696 aa).

Over residues 1 to 16 (MKFLQQNSFTQTSMSQ) the composition is skewed to polar residues. The interval 1 to 27 (MKFLQQNSFTQTSMSQPHEDVSPPLRH) is disordered. Fe(2+)-binding residues include His-244, His-298, His-361, and His-642.

Belongs to the carotenoid oxygenase family. Fe(2+) is required as a cofactor.

The catalysed reaction is all-trans-beta-carotene + O2 = 2 all-trans-retinal. The protein operates within carotenoid biosynthesis. Carotenoid dioxygenase; part of the car gene cluster that mediates the biosynthesis of neurosporaxanthin, a carboxylic apocarotenoid acting as an essential protective pigments and leading to orange pigmentation. CarX mediates the cleavage of beta-carotene produced by carAR into retinal, the rhodopsin's chromophore that is involved in the regulation of the carotenoid biosynthetic pathway via a negative feedback mechanism. It can also convert the synthetic compound beta-apo-8'-carotenal but not C35-apocarotenoids such as the acidic apocarotenoid neurosporaxanthin (C35), as well as its corresponding aldehyde beta-apo-4'-carotenal. The protein is Carotenoid dioxygenase carX of Gibberella fujikuroi (strain CBS 195.34 / IMI 58289 / NRRL A-6831) (Bakanae and foot rot disease fungus).